Here is an 80-residue protein sequence, read N- to C-terminus: Translational regulator CsrA (80 aa).

The protein belongs to the CsrA/RsmA family. In terms of assembly, homodimer; the beta-strands of each monomer intercalate to form a hydrophobic core, while the alpha-helices form wings that extend away from the core.

The protein localises to the cytoplasm. In terms of biological role, a translational regulator that binds mRNA to regulate translation initiation and/or mRNA stability. Usually binds in the 5'-UTR at or near the Shine-Dalgarno sequence preventing ribosome-binding, thus repressing translation. Its main target seems to be the major flagellin gene, while its function is anatagonized by FliW. This Desulforamulus reducens (strain ATCC BAA-1160 / DSM 100696 / MI-1) (Desulfotomaculum reducens) protein is Translational regulator CsrA.